A 177-amino-acid chain; its full sequence is Tumor necrosis factor ligand superfamily member 18 (177 aa).

Residues 1–27 (MCLSHLENMPLSHSRTQGAQRSSWKLW) lie on the Cytoplasmic side of the membrane. Residues 28 to 48 (LFCSIVMLLFLCSFSWLIFIF) traverse the membrane as a helical; Signal-anchor for type II membrane protein segment. The 124-residue stretch at 47 to 170 (IFLQLETAKE…NNTYWGIILL (124 aa)) folds into the THD domain. The Extracellular segment spans residues 49-177 (LQLETAKEPC…ILLANPQFIS (129 aa)). A disulfide bond links Cys58 and Cys78. N-linked (GlcNAc...) asparagine glycosylation is found at Asn129 and Asn161.

It belongs to the tumor necrosis factor family. Homodimer. Homotrimer. As to expression, expressed at high levels in the small intestine, ovary, testis, kidney and endothelial cells.

The protein localises to the cell membrane. Its function is as follows. Cytokine that binds to TNFRSF18/AITR/GITR. Regulates T-cell responses. Can function as costimulator and lower the threshold for T-cell activation and T-cell proliferation. Important for interactions between activated T-lymphocytes and endothelial cells. Mediates activation of NF-kappa-B. Triggers increased phosphorylation of STAT1 and up-regulates expression of VCAM1 and ICAM1. Promotes leukocyte adhesion to endothelial cells. Regulates migration of monocytes from the splenic reservoir to sites of inflammation. This is Tumor necrosis factor ligand superfamily member 18 from Homo sapiens (Human).